Here is a 490-residue protein sequence, read N- to C-terminus: ATP synthase subunit beta, chloroplastic (490 aa).

ATP is bound at residue 170 to 177 (GGAGVGKT).

This sequence belongs to the ATPase alpha/beta chains family. F-type ATPases have 2 components, CF(1) - the catalytic core - and CF(0) - the membrane proton channel. CF(1) has five subunits: alpha(3), beta(3), gamma(1), delta(1), epsilon(1). CF(0) has four main subunits: a(1), b(1), b'(1) and c(9-12).

It is found in the plastid. Its subcellular location is the chloroplast thylakoid membrane. It catalyses the reaction ATP + H2O + 4 H(+)(in) = ADP + phosphate + 5 H(+)(out). In terms of biological role, produces ATP from ADP in the presence of a proton gradient across the membrane. The catalytic sites are hosted primarily by the beta subunits. This is ATP synthase subunit beta, chloroplastic from Convolvulus arvensis (Field bindweed).